Consider the following 94-residue polypeptide: MGRSLKKGPYVDKKLLNKIKEMNESGKKKVIKTWSRDSTIFPEMVGHTIAVHDGQKHVPVYITEDMVGHKLGEFAPTRKFRGHGAHTERSTALK.

Belongs to the universal ribosomal protein uS19 family.

Protein S19 forms a complex with S13 that binds strongly to the 16S ribosomal RNA. The polypeptide is Small ribosomal subunit protein uS19 (Halothermothrix orenii (strain H 168 / OCM 544 / DSM 9562)).